The following is a 1895-amino-acid chain: Probable WRKY transcription factor 19 (1895 aa).

The tract at residues 1–85 is disordered; that stretch reads MSEKEELPLT…SGSGLSQQLN (85 aa). The span at 10–22 shows a compositional bias: polar residues; it reads TLTSIGAATATSD. Residues 28–39 are compositionally biased toward low complexity; the sequence is GSSGEGISSSSS. Positions 46–62 are enriched in polar residues; the sequence is MQNSPTGLMISQSSSMC. Residues 75–85 are compositionally biased toward low complexity; the sequence is SSGSGLSQQLN. Positions 291–371 constitute a PAH domain; the sequence is RPLTIDGGGN…LGFNTYLSKE (81 aa). The span at 408-417 shows a compositional bias: polar residues; the sequence is ANMQPQTEYP. 3 disordered regions span residues 408–442, 517–538, and 580–620; these read ANMQ…SSLL, YKDR…TYLS, and EASD…ADAS. Residues 418-427 show a composition bias toward low complexity; sequence SSSAVQSFSS. The segment covering 428–442 has biased composition (polar residues); sequence GQPQIPTSAPDSSLL. Positions 462–526 form a DNA-binding region, WRKY 1; it reads NVDKQVNDGY…YKDRHNHEPP (65 aa). A DNA-binding region (WRKY 2) is located at residues 635–700; it reads SEVDNLDDGY…SLCRRGISVY (66 aa). The TIR domain occupies 666–808; sequence KDYDVVIRYG…EIVRDALKVL (143 aa). Residues 800–1087 form the NB-ARC domain; the sequence is IVRDALKVLC…LDGCGFSAHV (288 aa). Residue 844 to 851 participates in ATP binding; sequence GTVGIGKT. 10 LRR repeats span residues 1206–1227, 1228–1249, 1259–1281, 1282–1304, 1306–1328, 1329–1351, 1352–1371, 1373–1395, 1397–1419, and 1421–1442; these read KLRL…FNPE, NLVE…KKAR, KLKK…SSAT, NLEH…ISYL, KLVF…VDLE, SLEV…SPNV, KELY…IKNL, LLEK…IYKL, HLET…SRRM, and CLRF…ISYL. The disordered stretch occupies residues 1562–1583; that stretch reads ETVAPPSSSSEAREEEVETEET. A Protein kinase domain is found at 1626-1877; that stretch reads WQKGQLLGRG…AAELLNHPFV (252 aa). Residues 1632–1640 and Lys-1654 contribute to the ATP site; that span reads LGRGSLGSV. Residue Asp-1758 is part of the active site.

The protein belongs to the disease resistance X-TIR-NB-LRR-X family.

It is found in the nucleus. Transcription factor. Interacts specifically with the W box (5'-(T)TGAC[CT]-3'), a frequently occurring elicitor-responsive cis-acting element. May act also as a disease resistance protein with a serine/threonine-protein kinase activity. The polypeptide is Probable WRKY transcription factor 19 (WRKY19) (Arabidopsis thaliana (Mouse-ear cress)).